A 330-amino-acid chain; its full sequence is Aspartate--ammonia ligase (330 aa).

It belongs to the class-II aminoacyl-tRNA synthetase family. AsnA subfamily.

Its subcellular location is the cytoplasm. It carries out the reaction L-aspartate + NH4(+) + ATP = L-asparagine + AMP + diphosphate + H(+). It participates in amino-acid biosynthesis; L-asparagine biosynthesis; L-asparagine from L-aspartate (ammonia route): step 1/1. The polypeptide is Aspartate--ammonia ligase (Mannheimia succiniciproducens (strain KCTC 0769BP / MBEL55E)).